The chain runs to 463 residues: Putative protein FAM90A2P (463 aa).

4 disordered regions span residues 1–42 (MTAR…DPRL), 67–115 (ALVP…PQRK), 150–295 (MPVH…PAQA), and 326–365 (ALEN…PPHS). Composition is skewed to basic and acidic residues over residues 74 to 83 (GKKEGKENLK), 97 to 114 (NKDK…DPQR), and 159 to 170 (PCVDPELADRSA). Over residues 180–198 (LASLSPLRKASLRSSSSLG) the composition is skewed to low complexity.

Belongs to the FAM90 family.

This chain is Putative protein FAM90A2P (FAM90A2P), found in Homo sapiens (Human).